A 755-amino-acid chain; its full sequence is Protein MTSS 1 (755 aa).

Residues 1-250 (MEAVIEKECS…EQVILDLKGS (250 aa)) form the IMD domain. Positions 108–155 (LQEQMEEWKKVANQLDKDHAKEYKKARQEIKKKSSDTLKLQKKAKKGR) form a coiled coil. 2 disordered regions span residues 139 to 159 (KKSS…GDIQ) and 255 to 305 (SYQT…RSSN). Residue Thr-258 is modified to Phosphothreonine. Phosphoserine occurs at positions 261, 262, 271, and 322. Residues 327–351 (QDAFQSKSPSPMPPEAPNQLSNGFS) form a disordered region. Thr-425 is subject to Phosphothreonine. Disordered stretches follow at residues 428–470 (RRKE…TRPG), 490–513 (DTQR…TTPC), and 563–755 (QAKR…PRFS). Positions 443–453 (TTASGPPAAAE) are enriched in low complexity. Thr-603 carries the phosphothreonine modification. The segment covering 608–623 (PIPIKTPVIPVKTPTV) has biased composition (low complexity). Phosphoserine occurs at positions 644 and 647. Over residues 656-671 (GVTSMPSSMWSGQASV) the composition is skewed to polar residues. The WH2 domain maps to 727–744 (QGEDMLNAIRRGVKLKKT).

The protein belongs to the MTSS family. As to quaternary structure, binds to actin. Binds to the cytoplasmic domain of receptor protein tyrosine phosphatase delta. Expressed in many tissues, including spleen, thymus, prostate, testis, uterus, colon, and peripheral blood.

Its subcellular location is the cytoplasm. The protein resides in the cytoskeleton. Functionally, may be related to cancer progression or tumor metastasis in a variety of organ sites, most likely through an interaction with the actin cytoskeleton. The polypeptide is Protein MTSS 1 (Homo sapiens (Human)).